The chain runs to 322 residues: Dioxygenase himG (322 aa).

Residues histidine 148 and histidine 229 each contribute to the Fe cation site.

This sequence belongs to the PhyH family. Homodimer. Fe cation serves as cofactor.

It functions in the pathway secondary metabolite biosynthesis. Its function is as follows. Polyketide synthase-nonribosomal peptide synthetase; part of the him gene cluster that mediates the biosynthesis of himeic acid A, a ubiquitin-activating enzyme (E1) inhibitor. First, himA, together with the trans-enoyl reductase himH, catalyzes the formation of apolyketide chain, which is then condensed with leucine by the NRPS activity of himA. Dieckmann cyclization and release from himA gives a tetramic acid intermediate as the product of himA PKS-NRPS. HimG then catalyzes alpha-oxidation of the tetramic acid ring, with a subsequent rearrangement to yield apyrone intermediate. Two terminal methyl groups of polyketide and amide side chains are oxidized to carboxylic acids by himC cytochrome P450 monooxygenase to form himeic acid A. Himeic acid A is further converted to himeic acid B and C during culture growth. No gene responsible for pyrone to pyridone conversion was found in the him gene cluster and himeic acid A is non-enzymatically converted to himeic acid C by the incorporation of an ammonium nitrogen atom in a pH5 buffer, and to himeic acid B at a conversion ratio of 50% during incubation in MeOH for 5 days. The polypeptide is Dioxygenase himG (Aspergillus japonicus).